A 453-amino-acid chain; its full sequence is MTTDTIVAQATAPGRGGVGIIRVSGPKANQVALEVTGKTLKPRYAEYLPFQAEDGTVLDQGIALYFPNPHSFTGEDVLELQGHGGPVVMDMLIKRILGIAGVRAARPGEFSERAFLNDKMDLTQAEAIADLIDASSEEAAKSALQSLQGQFSQRIQTLVESLIHLRIYVEAAIDFPEEEIDFLADGKVAGDLQAIIDNLDAVRKEANQGAIMREGMKVVIAGRPNAGKSSLLNALSGKESAIVTDIAGTTRDVLREHIHIDGMPLHIIDTAGLRDASDEVEKIGIERAWDEIAQADRVLFMVDGTTTDATDPKEIWPDFVDRLPESIGMTVIRNKADQTGEDMGICHVNDPTLIRLSAKTGAGVDALRNHLKECMGFSGNTEGGFMARRRHLDALERAAQHLQIGQEQLEGYMAGEILAEELRITQQHLNEITGEFSSDDLLGRIFSSFCIGK.

(6S)-5-formyl-5,6,7,8-tetrahydrofolate-binding residues include arginine 22, glutamate 79, and lysine 119. The TrmE-type G domain occupies glycine 215–glycine 376. Asparagine 225 provides a ligand contact to K(+). GTP contacts are provided by residues asparagine 225 to serine 230, threonine 244 to threonine 250, aspartate 269 to glycine 272, and asparagine 334 to aspartate 337. Residue serine 229 coordinates Mg(2+). Residues threonine 244, isoleucine 246, and threonine 249 each contribute to the K(+) site. Threonine 250 provides a ligand contact to Mg(2+). Lysine 453 contributes to the (6S)-5-formyl-5,6,7,8-tetrahydrofolate binding site.

This sequence belongs to the TRAFAC class TrmE-Era-EngA-EngB-Septin-like GTPase superfamily. TrmE GTPase family. Homodimer. Heterotetramer of two MnmE and two MnmG subunits. The cofactor is K(+).

Its subcellular location is the cytoplasm. Exhibits a very high intrinsic GTPase hydrolysis rate. Involved in the addition of a carboxymethylaminomethyl (cmnm) group at the wobble position (U34) of certain tRNAs, forming tRNA-cmnm(5)s(2)U34. The polypeptide is tRNA modification GTPase MnmE (Vibrio parahaemolyticus serotype O3:K6 (strain RIMD 2210633)).